The primary structure comprises 513 residues: Serine/threonine-protein kinase UL13 homolog (513 aa).

Residues 1–27 form a disordered region; sequence MDTESKNKKTTNGGENSNCSHSTRTPD. The segment covering 10 to 23 has biased composition (polar residues); the sequence is TTNGGENSNCSHST. Positions 145-487 constitute a Protein kinase domain; it reads KEMPIYAGSG…FDSLNIFPYL (343 aa). Residues 151 to 159 and lysine 170 each bind ATP; that span reads AGSGSYGVV. Aspartate 268 functions as the Proton acceptor in the catalytic mechanism.

This sequence belongs to the protein kinase superfamily. Ser/Thr protein kinase family. In terms of processing, autophosphorylated.

The protein resides in the virion tegument. The protein localises to the host nucleus. It catalyses the reaction L-seryl-[protein] + ATP = O-phospho-L-seryl-[protein] + ADP + H(+). The enzyme catalyses L-threonyl-[protein] + ATP = O-phospho-L-threonyl-[protein] + ADP + H(+). Functionally, multifunctional serine/threonine kinase that plays a role in several processes including egress of virus particles from the nucleus, modulation of the actin cytoskeleton and regulation of viral and cellular gene expression. The sequence is that of Serine/threonine-protein kinase UL13 homolog (MDV025) from Gallid herpesvirus 2 (strain Chicken/Md5/ATCC VR-987) (GaHV-2).